Consider the following 95-residue polypeptide: Large ribosomal subunit protein eL37y (95 aa).

Residues C19, C22, C34, and C37 each contribute to the Zn(2+) site. The segment at 19–37 adopts a C4-type zinc-finger fold; that stretch reads CVRCGRRSFHIQKSRCSAC.

It belongs to the eukaryotic ribosomal protein eL37 family. The cofactor is Zn(2+).

Functionally, binds to the 23S rRNA. This is Large ribosomal subunit protein eL37y (RPL37B) from Arabidopsis thaliana (Mouse-ear cress).